Here is a 141-residue protein sequence, read N- to C-terminus: MTMNQTVLGFDYGTKSIGVAVGQSITASASPLLALKAQDGIPNWDEIEKLIKEWQPDLVVVGLPLNMDGTEQDITQRAKKFANRISGRFGVKVLTQDERLTTADAKARLFELGGYKALTKGQVDAVSAVLIIESYFENQYD.

This sequence belongs to the YqgF nuclease family.

It localises to the cytoplasm. Functionally, could be a nuclease involved in processing of the 5'-end of pre-16S rRNA. In Shewanella denitrificans (strain OS217 / ATCC BAA-1090 / DSM 15013), this protein is Putative pre-16S rRNA nuclease.